Consider the following 520-residue polypeptide: Ribonuclease Y 2 (520 aa).

The chain crosses the membrane as a helical span at residues 7-23 (VVLLLASIGVGYGLRAK). The 64-residue stretch at 206 to 269 (NHRSFIAENA…AVAMETMEMI (64 aa)) folds into the KH domain. In terms of domain architecture, HD spans 332–425 (ILEHSIETAK…VEAADAISGA (94 aa)).

The protein belongs to the RNase Y family.

The protein localises to the cell membrane. Endoribonuclease that initiates mRNA decay. This chain is Ribonuclease Y 2, found in Pediococcus pentosaceus (strain ATCC 25745 / CCUG 21536 / LMG 10740 / 183-1w).